The sequence spans 290 residues: ADP-ribosylation factor-like protein 13A (290 aa).

GTP is bound by residues 28-35 (GLNNSGKT), 71-75 (DLNGD), and 130-133 (NKQD). The interval 204–226 (SKNNTGSGERCSSHSFSTRTGMS) is disordered.

It belongs to the small GTPase superfamily. Arf family.

This Homo sapiens (Human) protein is ADP-ribosylation factor-like protein 13A (ARL13A).